The sequence spans 371 residues: Trans-enoyl reductase calK (371 aa).

51–54 (NDHK) contributes to the NADP(+) binding site. 145–152 (WSTISLAF) contributes to the substrate binding site. Residues 181 to 184 (GTAS), 204 to 207 (SNQS), Tyr-222, and 269 to 270 (LE) contribute to the NADP(+) site. 289 to 293 (GFQVL) contributes to the substrate binding site. NADP(+) is bound at residue 359–360 (VR).

It belongs to the zinc-containing alcohol dehydrogenase family. In terms of assembly, monomer.

It participates in secondary metabolite biosynthesis. Trans-enoyl reductase; part of the gene cluster that mediates the biosynthesis of calbistrin A and related compounds. Calbistrin A is a secondary metabolite with an interesting structure that was recently found to have bioactivity against leukemia cells. It consists of two polyketides linked by an ester bond: a bicyclic decalin containing polyketide and a linear 12 carbon dioic acid structure. The polyketide synthase calA is probably responsible for forming the decalin moiety. Because calA lacks a designated enoylreductase (ER) domain, the required activity is provided by the trans-enoyl reductase calK. Following release from the PKS, calF then probably catalyzes the oxidation and the subsequent Diels Alder cycloisomerization that lead to the formation of the decalin moiety. The decalin polyketide backbone includes two C-methyl groups, at C7 and C11 in backbone, of which the C7 position is probably methylated by the methyltransferase domain of calA. A candidate for adding the methyl group at C11, if not done by CalA, is the cluster methyltransferase calH. Several additional tailoring enzymes within the cluster could be involved in the modification of the decalin polyketide product. Those include the 3 cytochrome P450 monooxygenases CalE, CalG and CalL, of which one might be responsible for the introduction of the extra hydroxyl group attached to the backbone of the decalin moiety, at position C9 in the backbone, that allows for attachment of the linear moiety. One tailoring enzyme activity that is expected to be involved in biosynthesis of calbistrin is an acyltransferase for connecting the two polyketide synthase products, and which could be performed by the cluster acyltransferase calJ. The enzyme responsible for the biosynthesis of the linear moiety, probably a second PKS, has not been identified yet. The chain is Trans-enoyl reductase calK from Penicillium decumbens.